The following is a 680-amino-acid chain: MEDMFSPLIEVENLRREINRHNQLYYVQDNPEISDAQYDTLIRRLKELEEAHPELVTPDSPTQRVGAEPLKAFGIVNHPYPLLSLANAFSDTELEAWYQRVKKLLGNIPFQIDCEPKMDGLAVALTYRNGKFATGATRGDGFQGENITRNLRTIHSIPLNAEPNAPPVFEVRGEVYLSKNGFAKLNRERADKGLPLFANPRNAAAGSLRQLDPSVTAERPLDIFIYALGYSEDSLLPDSHWQILDYFSKIGFRINPLNRLVNTLEEAKEYYRQMAANRASLPYEADGVVFKVDSVSLQHRLGDVGREPRWAIAYKFPAEQVMTRLKKIGISVGRTGTLNPFAVLEPVNVGGVVVKQAALHNEDDILRKDIREGDTVIIQRAGEVIPEVVAPVLSKRNPESKPFRMEESLFNPNLNRTACPVCGGEIYRPAGEAMHYCANVSCPAQFERQLEHFVSRGAMDIRGIGESLSVILAQQGLVKNVSDLYYLTTADLLQLPRMGEKSADNIIDAIADSKTRPLDRVIFGLGVRHVGNETATLLSRHYGNIWALAKTGLGELQTIPDIGDKIASSIVAYFSEEKNVAVIRRLEEAGVRLTSDQKPVNKNMPFSGMEFVVTGKLESFSREEAQEKIRSLGGTAKDNVTKATNYLVVGADAGSKLTKARSMGVKELSEREFINMLEQS.

NAD(+) is bound by residues 35 to 39 (DAQYD), 84 to 85 (SL), and Glu-115. Lys-117 (N6-AMP-lysine intermediate) is an active-site residue. The NAD(+) site is built by Arg-138, Glu-174, Lys-291, and Lys-315. The Zn(2+) site is built by Cys-419, Cys-422, Cys-437, and Cys-442. The 80-residue stretch at 601 to 680 (NKNMPFSGME…REFINMLEQS (80 aa)) folds into the BRCT domain.

The protein belongs to the NAD-dependent DNA ligase family. LigA subfamily. Mg(2+) serves as cofactor. Mn(2+) is required as a cofactor.

The catalysed reaction is NAD(+) + (deoxyribonucleotide)n-3'-hydroxyl + 5'-phospho-(deoxyribonucleotide)m = (deoxyribonucleotide)n+m + AMP + beta-nicotinamide D-nucleotide.. Its function is as follows. DNA ligase that catalyzes the formation of phosphodiester linkages between 5'-phosphoryl and 3'-hydroxyl groups in double-stranded DNA using NAD as a coenzyme and as the energy source for the reaction. It is essential for DNA replication and repair of damaged DNA. The sequence is that of DNA ligase from Dehalococcoides mccartyi (strain ATCC BAA-2100 / JCM 16839 / KCTC 5957 / BAV1).